We begin with the raw amino-acid sequence, 395 residues long: Enoyl-[acyl-carrier-protein] reductase [NADH] (395 aa).

Residues 48–53, 74–75, 111–112, and 139–140 each bind NAD(+); these read GASTGY, FE, DA, and LA. Y225 provides a ligand contact to substrate. The Proton donor role is filled by Y235. Residues K244 and 273 to 275 contribute to the NAD(+) site; that span reads LVT.

The protein belongs to the TER reductase family. As to quaternary structure, monomer.

The enzyme catalyses a 2,3-saturated acyl-[ACP] + NAD(+) = a (2E)-enoyl-[ACP] + NADH + H(+). It participates in lipid metabolism; fatty acid biosynthesis. Functionally, involved in the final reduction of the elongation cycle of fatty acid synthesis (FAS II). Catalyzes the reduction of a carbon-carbon double bond in an enoyl moiety that is covalently linked to an acyl carrier protein (ACP). This Saccharophagus degradans (strain 2-40 / ATCC 43961 / DSM 17024) protein is Enoyl-[acyl-carrier-protein] reductase [NADH].